Reading from the N-terminus, the 124-residue chain is Large ribosomal subunit protein bL12 (124 aa).

This sequence belongs to the bacterial ribosomal protein bL12 family. Homodimer. Part of the ribosomal stalk of the 50S ribosomal subunit. Forms a multimeric L10(L12)X complex, where L10 forms an elongated spine to which 2 to 4 L12 dimers bind in a sequential fashion. Binds GTP-bound translation factors.

In terms of biological role, forms part of the ribosomal stalk which helps the ribosome interact with GTP-bound translation factors. Is thus essential for accurate translation. This Burkholderia ambifaria (strain MC40-6) protein is Large ribosomal subunit protein bL12.